Here is a 430-residue protein sequence, read N- to C-terminus: MLYEKFEHNINNLIGGFGLSKIAIAVSGGSDSVALLYLANIWAKKNNIELFVLSVDHNLRDQSKQEIEYIQNTANDLGLKFYSLFFDHQNNFSNLQERARKGRYDLMTSLCQKLDILVLLTAHHEDDYIENFCLRLERKSGVFGLSSSSVNWHNNTQIIRPLFNIPKSELVNYLATNNIKWFEDQSNLSTKYRRNTIRQKLAKEEVYIKDDIITQQIKVNELIENKFKPELISAIAESVKISEYGFAFLDLIKFSGFSQEVRVQLINFLLIIISGQQRSARFYSVEPILKLIRQSLDFKNTLHGCVIKRMQNKLLIYREFGKKLPESKLLLDKQLVWDNRFRITKNHDIENCVATYLSLEDYKIIKEKLDLEVLKNLSCGNHNAILFTLPIVKILEKVVAIPHISYYDNDIKSFNVSFAPDFTSRFTHFY.

27–32 (SGGSDS) is a binding site for ATP.

Belongs to the tRNA(Ile)-lysidine synthase family.

It localises to the cytoplasm. It catalyses the reaction cytidine(34) in tRNA(Ile2) + L-lysine + ATP = lysidine(34) in tRNA(Ile2) + AMP + diphosphate + H(+). Its function is as follows. Ligates lysine onto the cytidine present at position 34 of the AUA codon-specific tRNA(Ile) that contains the anticodon CAU, in an ATP-dependent manner. Cytidine is converted to lysidine, thus changing the amino acid specificity of the tRNA from methionine to isoleucine. This is tRNA(Ile)-lysidine synthase from Rickettsia bellii (strain OSU 85-389).